We begin with the raw amino-acid sequence, 1055 residues long: Inactive exonuclease DIS3L2 (1055 aa).

Disordered stretches follow at residues 1–109 (MKSA…SSPE) and 229–249 (SAAK…KARQ). Positions 17–32 (HKKKRNRPQKQNRRSK) are enriched in basic residues. Positions 39–59 (EDAHVEESLDGRDSSRSKAKD) are enriched in basic and acidic residues. Residues 97–108 (PRRSASPLLSSP) show a composition bias toward low complexity. The CSD2 domain maps to 367-446 (YVQLMPADPR…PQINAILYQN (80 aa)). An RNB domain is found at 476 to 824 (RKDLRDLCVL…VHRALAAALE (349 aa)). 2 residues coordinate Mg(2+): aspartate 488 and aspartate 497.

This sequence belongs to the RNR ribonuclease family. DIS3L2 subfamily.

It localises to the cytoplasm. Its function is as follows. Probable inactive 3'-5'-exoribonuclease. Is unable to complement the growth defect of a yeast mutant lacking RRP44 exonuclease. This is Inactive exonuclease DIS3L2 from Arabidopsis thaliana (Mouse-ear cress).